A 180-amino-acid polypeptide reads, in one-letter code: Pro-glucagon (180 aa).

A signal peptide spans 1 to 20 (MKNIYIVAGFFVVLVQGSWQ). Residues 25-59 (DTEEKSRSFPASQTDPLEDPDQINEDKRHSQGTFT) form a disordered region. Serine 54 bears the Phosphoserine mark. A propeptide spanning residues 84–89 (NRNNIA) is cleaved from the precursor. Phosphoserine occurs at positions 105 and 108. The residue at position 127 (arginine 127) is an Arginine amide. Residues 131–145 (DFPEEVTIVEELGRR) constitute a propeptide that is removed on maturation. 2 positions are modified to phosphoserine: serine 150 and serine 152.

The protein belongs to the glucagon family. Proglucagon is post-translationally processed in a tissue-specific manner in pancreatic A cells and intestinal L cells. In pancreatic A cells, the major bioactive hormone is glucagon cleaved by PCSK2/PC2. In the intestinal L cells PCSK1/PC1 liberates GLP-1, GLP-2, glicentin and oxyntomodulin. GLP-1 is further N-terminally truncated by post-translational processing in the intestinal L cells resulting in GLP-1(7-37) GLP-1-(7-36)amide. The C-terminal amidation is neither important for the metabolism of GLP-1 nor for its effects on the endocrine pancreas.

The protein resides in the secreted. In terms of biological role, plays a key role in glucose metabolism and homeostasis. Regulates blood glucose by increasing gluconeogenesis and decreasing glycolysis. A counterregulatory hormone of insulin, raises plasma glucose levels in response to insulin-induced hypoglycemia. Plays an important role in initiating and maintaining hyperglycemic conditions in diabetes. Its function is as follows. Potent stimulator of glucose-dependent insulin release. Also stimulates insulin release in response to IL6. Plays important roles on gastric motility and the suppression of plasma glucagon levels. May be involved in the suppression of satiety and stimulation of glucose disposal in peripheral tissues, independent of the actions of insulin. Has growth-promoting activities on intestinal epithelium. May also regulate the hypothalamic pituitary axis (HPA) via effects on LH, TSH, CRH, oxytocin, and vasopressin secretion. Increases islet mass through stimulation of islet neogenesis and pancreatic beta cell proliferation. Inhibits beta cell apoptosis. Functionally, stimulates intestinal growth and up-regulates villus height in the small intestine, concomitant with increased crypt cell proliferation and decreased enterocyte apoptosis. The gastrointestinal tract, from the stomach to the colon is the principal target for GLP-2 action. Plays a key role in nutrient homeostasis, enhancing nutrient assimilation through enhanced gastrointestinal function, as well as increasing nutrient disposal. Stimulates intestinal glucose transport and decreases mucosal permeability. Significantly reduces food intake. Inhibits gastric emptying in humans. Suppression of gastric emptying may lead to increased gastric distension, which may contribute to satiety by causing a sensation of fullness. In terms of biological role, may modulate gastric acid secretion and the gastro-pyloro-duodenal activity. May play an important role in intestinal mucosal growth in the early period of life. This is Pro-glucagon (GCG) from Mesocricetus auratus (Golden hamster).